The primary structure comprises 253 residues: Sulfate transporter CysZ (253 aa).

4 helical membrane passes run 31–51, 75–95, 151–171, and 222–242; these read FVIL…WWLF, LLWP…FSTI, IVLL…PVLW, and IPLL…AMWV.

The protein belongs to the CysZ family.

It localises to the cell inner membrane. Functionally, high affinity, high specificity proton-dependent sulfate transporter, which mediates sulfate uptake. Provides the sulfur source for the cysteine synthesis pathway. The sequence is that of Sulfate transporter CysZ from Escherichia coli O127:H6 (strain E2348/69 / EPEC).